The primary structure comprises 583 residues: Asparagine synthetase, root [glutamine-hydrolyzing] (583 aa).

C2 serves as the catalytic For GATase activity. Residues 2–185 form the Glutamine amidotransferase type-2 domain; it reads CGILAVLGCS…PGHLYSSKDS (184 aa). Residues 50 to 54, 75 to 77, and D98 contribute to the L-glutamine site; these read RLAIV and NGE. ATP contacts are provided by residues L231, V267, and 341–342; that span reads SG. The region spanning 237–516 is the Asparagine synthetase domain; the sequence is DSSLVASITS…PQNSARLTVP (280 aa).

In terms of tissue distribution, roots.

It catalyses the reaction L-aspartate + L-glutamine + ATP + H2O = L-asparagine + L-glutamate + AMP + diphosphate + H(+). It participates in amino-acid biosynthesis; L-asparagine biosynthesis; L-asparagine from L-aspartate (L-Gln route): step 1/1. The protein is Asparagine synthetase, root [glutamine-hydrolyzing] (AS2) of Pisum sativum (Garden pea).